Here is a 71-residue protein sequence, read N- to C-terminus: MSKDDLIQFTGTVLELLPNATFRVKLENDHIIIAHTSGRMRKNRIRILLGDKVTVEMTPYDLTKGRVIHRH.

The region spanning 1 to 71 (MSKDDLIQFT…LTKGRVIHRH (71 aa)) is the S1-like domain.

Belongs to the IF-1 family. Component of the 30S ribosomal translation pre-initiation complex which assembles on the 30S ribosome in the order IF-2 and IF-3, IF-1 and N-formylmethionyl-tRNA(fMet); mRNA recruitment can occur at any time during PIC assembly.

It is found in the cytoplasm. One of the essential components for the initiation of protein synthesis. Stabilizes the binding of IF-2 and IF-3 on the 30S subunit to which N-formylmethionyl-tRNA(fMet) subsequently binds. Helps modulate mRNA selection, yielding the 30S pre-initiation complex (PIC). Upon addition of the 50S ribosomal subunit IF-1, IF-2 and IF-3 are released leaving the mature 70S translation initiation complex. In Rickettsia prowazekii (strain Madrid E), this protein is Translation initiation factor IF-1.